The sequence spans 279 residues: Energy-coupling factor transporter ATP-binding protein EcfA1 (279 aa).

One can recognise an ABC transporter domain in the interval 6-240 (VRLEHVFYKY…ADAMREIGLG (235 aa)). 40–47 (GHNGSGKS) contributes to the ATP binding site.

This sequence belongs to the ABC transporter superfamily. Energy-coupling factor EcfA family. In terms of assembly, forms a stable energy-coupling factor (ECF) transporter complex composed of 2 membrane-embedded substrate-binding proteins (S component), 2 ATP-binding proteins (A component) and 2 transmembrane proteins (T component).

The protein localises to the cell membrane. In terms of biological role, ATP-binding (A) component of a common energy-coupling factor (ECF) ABC-transporter complex. Unlike classic ABC transporters this ECF transporter provides the energy necessary to transport a number of different substrates. This Listeria monocytogenes serotype 4b (strain F2365) protein is Energy-coupling factor transporter ATP-binding protein EcfA1.